Consider the following 278-residue polypeptide: UPF0761 membrane protein CBU_1578 (278 aa).

7 consecutive transmembrane segments (helical) span residues 38–58, 68–88, 92–112, 134–154, 177–197, 207–227, and 244–264; these read LLAL…VPAF, LIWE…LSQL, VTGL…LLMY, FLIY…VMLL, LLFV…NWVL, AVIG…AFTV, and VIPI…LGAV.

It belongs to the UPF0761 family.

It localises to the cell inner membrane. The sequence is that of UPF0761 membrane protein CBU_1578 from Coxiella burnetii (strain RSA 493 / Nine Mile phase I).